The primary structure comprises 256 residues: Small ribosomal subunit protein eS1 (256 aa).

Positions 1–18 (MAVGKNKRLSKGKKGVKK) are enriched in basic residues. The tract at residues 1–20 (MAVGKNKRLSKGKKGVKKRT) is disordered. Alanine 2 carries the N-acetylalanine; partial modification.

The protein belongs to the eukaryotic ribosomal protein eS1 family. As to quaternary structure, component of the small ribosomal subunit. Mature ribosomes consist of a small (40S) and a large (60S) subunit. The 40S subunit contains about 33 different proteins and 1 molecule of RNA (18S). The 60S subunit contains about 49 different proteins and 3 molecules of RNA (25S, 5.8S and 5S).

The protein localises to the cytoplasm. This is Small ribosomal subunit protein eS1 (rps1) from Aspergillus clavatus (strain ATCC 1007 / CBS 513.65 / DSM 816 / NCTC 3887 / NRRL 1 / QM 1276 / 107).